Here is a 585-residue protein sequence, read N- to C-terminus: Formate--tetrahydrofolate ligase (585 aa).

An ATP-binding site is contributed by 65–72; that stretch reads TPHGEGKT.

It belongs to the formate--tetrahydrofolate ligase family.

The catalysed reaction is (6S)-5,6,7,8-tetrahydrofolate + formate + ATP = (6R)-10-formyltetrahydrofolate + ADP + phosphate. It functions in the pathway one-carbon metabolism; tetrahydrofolate interconversion. The protein is Formate--tetrahydrofolate ligase of Shewanella baltica (strain OS155 / ATCC BAA-1091).